The primary structure comprises 437 residues: Trigger factor (437 aa).

The region spanning 164-249 is the PPIase FKBP-type domain; sequence GDFAKFDFEG…LHEIQCKKIG (86 aa).

It belongs to the FKBP-type PPIase family. Tig subfamily.

It localises to the cytoplasm. The enzyme catalyses [protein]-peptidylproline (omega=180) = [protein]-peptidylproline (omega=0). Involved in protein export. Acts as a chaperone by maintaining the newly synthesized protein in an open conformation. Functions as a peptidyl-prolyl cis-trans isomerase. The protein is Trigger factor of Campylobacter hominis (strain ATCC BAA-381 / DSM 21671 / CCUG 45161 / LMG 19568 / NCTC 13146 / CH001A).